Here is a 130-residue protein sequence, read N- to C-terminus: Small ribosomal subunit protein uS9 (130 aa).

It belongs to the universal ribosomal protein uS9 family.

This is Small ribosomal subunit protein uS9 from Stutzerimonas stutzeri (strain A1501) (Pseudomonas stutzeri).